A 512-amino-acid chain; its full sequence is SWI/SNF complex subunit SWI3A (512 aa).

An SWIRM domain is found at 13 to 110 (YTIPAQSSWF…FSSSLKKNDH (98 aa)). Residues 223 to 274 (SAAAVWTEEEILLLLESVLKHGDDWELISQSVSTKSRLDCISKLIELPFGEF) form the SANT domain. Residues 291 to 325 (DENTEQVQTDGQEHEETETREEKEDRVNEDEPPAK) are disordered. The stretch at 424 to 488 (ALGAAAAQAK…IEGVKETIIQ (65 aa)) forms a coiled coil.

As to quaternary structure, homodimers and heterodimers. Interacts with SWI3B, SWI3C, BSH, and the C-terminus of FCA, but not with BRM or SWI3D. As to expression, expressed in roots, stems, leaves and flowers, but not in siliques.

The protein resides in the nucleus. In terms of biological role, component of a multiprotein complex equivalent of the SWI/SNF complex, an ATP-dependent chromatin-remodeling complex, which is required for the positive and negative regulation of gene expression of a large number of genes. It changes chromatin structure by altering DNA-histone contacts within a nucleosome, leading eventually to a change in nucleosome position, thus facilitating or repressing binding of gene-specific transcription factors. In Arabidopsis thaliana (Mouse-ear cress), this protein is SWI/SNF complex subunit SWI3A (SWI3A).